Consider the following 348-residue polypeptide: Histidinol-phosphate aminotransferase (348 aa).

Lys210 carries the post-translational modification N6-(pyridoxal phosphate)lysine.

This sequence belongs to the class-II pyridoxal-phosphate-dependent aminotransferase family. Histidinol-phosphate aminotransferase subfamily. As to quaternary structure, homodimer. Pyridoxal 5'-phosphate serves as cofactor.

The enzyme catalyses L-histidinol phosphate + 2-oxoglutarate = 3-(imidazol-4-yl)-2-oxopropyl phosphate + L-glutamate. It participates in amino-acid biosynthesis; L-histidine biosynthesis; L-histidine from 5-phospho-alpha-D-ribose 1-diphosphate: step 7/9. The sequence is that of Histidinol-phosphate aminotransferase from Pseudomonas putida (strain ATCC 47054 / DSM 6125 / CFBP 8728 / NCIMB 11950 / KT2440).